The chain runs to 269 residues: Phosphatidylglycerol--prolipoprotein diacylglyceryl transferase (269 aa).

The next 4 membrane-spanning stretches (helical) occupy residues 14-34 (IVQIGGFAVRWYSLLILAGII), 49-69 (VAPEVLSDLVVWLVVGAIPMA), 89-109 (VFAIWEGGIAIHGAILGGLLA), and 118-138 (GYSLLTMIDLAAPGLILGQAI). Arg140 contributes to the a 1,2-diacyl-sn-glycero-3-phospho-(1'-sn-glycerol) binding site. 3 helical membrane-spanning segments follow: residues 180-200 (TFLYESLWNLGVLALLLFVFF), 208-228 (GSIACLYALAYSVGRFWIEGL), and 240-260 (TAQLVSLAGIVLGAVGLWWLN).

It belongs to the Lgt family.

It is found in the cell inner membrane. The catalysed reaction is L-cysteinyl-[prolipoprotein] + a 1,2-diacyl-sn-glycero-3-phospho-(1'-sn-glycerol) = an S-1,2-diacyl-sn-glyceryl-L-cysteinyl-[prolipoprotein] + sn-glycerol 1-phosphate + H(+). The protein operates within protein modification; lipoprotein biosynthesis (diacylglyceryl transfer). Functionally, catalyzes the transfer of the diacylglyceryl group from phosphatidylglycerol to the sulfhydryl group of the N-terminal cysteine of a prolipoprotein, the first step in the formation of mature lipoproteins. The protein is Phosphatidylglycerol--prolipoprotein diacylglyceryl transferase of Gloeobacter violaceus (strain ATCC 29082 / PCC 7421).